We begin with the raw amino-acid sequence, 429 residues long: MAAAAAVVTPSGLEDEVSRSRGEGAGEMVVERGPGAAYHMFVVMEDLVEKLKLLRYEENLLRKNNLKPPSRHYFALPTNPGEQFYMFCTLAAWLINKAGRPFEQPQEYDDPNAIISNILSELRSFGRTADFPPSKLKSGYGEHVCYVLDCLAEEALKYIGFTWKRPAYPVEELEEETVAEDDAELTLNKVDEEFVEEETDNEENFIDLNVLKAQTYRLDMNESAKQEDILESTTDAAEWSLEVERVLPQLKVTIRTDNKDWRIHVDQMHQHKSGIESALKETKGFLDRLHNEISRTLEKIGSREKYINNQLEHLVQEYRAAQAQLSEARERYQQGNGGVTERTRILSEVTEELEKVKQEMEEKGSSMTDGAPLVKIKQSLTKLKQETVQMDIRIGVVEHTLLQSKLKEKSNMTRDMHATIIPESAIGSY.

Positions 1-26 (MAAAAAVVTPSGLEDEVSRSRGEGAG) are disordered. Positions 305–369 (KYINNQLEHL…MEEKGSSMTD (65 aa)) form a coiled coil. The pDED stretch occupies residues 335–426 (GNGGVTERTR…HATIIPESAI (92 aa)).

It belongs to the IFT57 family. In terms of assembly, component of the IFT complex B, at least composed of IFT20, IFT22, IFT25, IFT27, IFT46, IFT52, TRAF3IP1/IFT54, IFT57, IFT74, IFT80, IFT81, and IFT88. Interacts with IFT20. Interacts with IFT88. Interacts with IFT80, IFT-81, IFT74, IFT172, IFT70B and KIF17. Interacts with BLOC1S2. Interacts with RYBP. Interacts with HOMER1; the interaction possibly prevents the pro-apoptotic effects of IFT57. Interacts with HIP1. In normal conditions, it poorly interacts with HIP1, HIP1 being strongly associated with HTT. However, in mutant HTT proteins with a long poly-Gln region, interaction between HTT and HIP1 is inhibited, promoting the interaction between HIP1 and IFT57, leading to apoptosis. Interacts with BFAR. Interacts with TTC25. Interacts with USH1G. In terms of tissue distribution, in retina, detected in the photoreceptor basal body and connecting cilium. Most abundant in the inner segment of photoreceptors (at protein level).

It is found in the cell projection. It localises to the cilium. Its subcellular location is the cytoplasm. The protein resides in the cytoskeleton. The protein localises to the cilium basal body. In terms of biological role, required for the formation of cilia. Plays an indirect role in sonic hedgehog signaling, cilia being required for all activity of the hedgehog pathway. Has pro-apoptotic function via its interaction with HIP1, leading to recruit caspase-8 (CASP8) and trigger apoptosis. Has the ability to bind DNA sequence motif 5'-AAAGACATG-3' present in the promoter of caspase genes such as CASP1, CASP8 and CASP10, suggesting that it may act as a transcription regulator; however the relevance of such function remains unclear. In Bos taurus (Bovine), this protein is Intraflagellar transport protein 57 homolog (IFT57).